We begin with the raw amino-acid sequence, 143 residues long: Antiholin-like protein LrgA (143 aa).

A run of 4 helical transmembrane segments spans residues 6–26 (VYSF…SNII), 30–50 (LPIP…LLCL), 61–81 (LGTA…ISVI), and 97–117 (VIVV…QFIL).

The protein belongs to the CidA/LrgA family. LrgA subfamily.

It localises to the cell membrane. Inhibits the expression or activity of extracellular murein hydrolases by interacting, possibly with LrgB, with the holin-like protein CidA. The LrgAB and CidA proteins may affect the proton motive force of the membrane. May be involved in programmed cell death (PCD), possibly triggering PCD in response to antibiotics and environmental stresses. In Bacillus cereus (strain AH820), this protein is Antiholin-like protein LrgA.